The primary structure comprises 419 residues: Histidine--tRNA ligase (419 aa).

It belongs to the class-II aminoacyl-tRNA synthetase family.

It is found in the cytoplasm. The enzyme catalyses tRNA(His) + L-histidine + ATP = L-histidyl-tRNA(His) + AMP + diphosphate + H(+). This chain is Histidine--tRNA ligase, found in Pyrobaculum aerophilum (strain ATCC 51768 / DSM 7523 / JCM 9630 / CIP 104966 / NBRC 100827 / IM2).